A 53-amino-acid chain; its full sequence is UPF0391 membrane protein Bxeno_A2958 (53 aa).

2 consecutive transmembrane segments (helical) span residues 5–25 and 30–50; these read AIVF…GIAA and IAKI…LLGV.

The protein belongs to the UPF0391 family.

It localises to the cell membrane. The polypeptide is UPF0391 membrane protein Bxeno_A2958 (Paraburkholderia xenovorans (strain LB400)).